The chain runs to 87 residues: Polyketide-8 synthase acyl carrier protein 2 (87 aa).

The Carrier domain occupies 8 to 83 (ALDKEQLREL…GTYELLTSKL (76 aa)). Position 43 is an O-(pantetheine 4'-phosphoryl)serine (S43).

4'-phosphopantetheine is transferred from CoA to a specific serine of the apo-ACP-like protein.

Acyl carrier protein. The chain is Polyketide-8 synthase acyl carrier protein 2 from Streptomyces avermitilis (strain ATCC 31267 / DSM 46492 / JCM 5070 / NBRC 14893 / NCIMB 12804 / NRRL 8165 / MA-4680).